Here is a 696-residue protein sequence, read N- to C-terminus: Zinc finger SWIM domain-containing protein 3 (696 aa).

An SWIM-type zinc finger spans residues Val531–Gln572.

The sequence is that of Zinc finger SWIM domain-containing protein 3 (ZSWIM3) from Homo sapiens (Human).